The chain runs to 216 residues: Uracil phosphoribosyltransferase (216 aa).

Residues arginine 30, arginine 39, 73–76 (ASKI), and lysine 75 each bind GTP. Arginine 83 is a 5-phospho-alpha-D-ribose 1-diphosphate binding site. A GTP-binding site is contributed by lysine 100. Residue arginine 108 coordinates 5-phospho-alpha-D-ribose 1-diphosphate. A GTP-binding site is contributed by arginine 129. 5-phospho-alpha-D-ribose 1-diphosphate-binding positions include aspartate 135 and 135 to 143 (DPMLATGGT). Tyrosine 199 is a D-ribose 5-phosphate binding site. Uracil is bound by residues isoleucine 200 and 205–207 (GDF). Aspartate 206 is a 5-phospho-alpha-D-ribose 1-diphosphate binding site.

Belongs to the UPRTase family. It depends on Mg(2+) as a cofactor.

The enzyme catalyses UMP + diphosphate = 5-phospho-alpha-D-ribose 1-diphosphate + uracil. Its pathway is pyrimidine metabolism; UMP biosynthesis via salvage pathway; UMP from uracil: step 1/1. Its activity is regulated as follows. Allosterically activated by GTP. Catalyzes the conversion of uracil and 5-phospho-alpha-D-ribose 1-diphosphate (PRPP) to UMP and diphosphate. This Dictyostelium discoideum (Social amoeba) protein is Uracil phosphoribosyltransferase (uprt).